The sequence spans 449 residues: Exodeoxyribonuclease 7 large subunit (449 aa).

This sequence belongs to the XseA family. As to quaternary structure, heterooligomer composed of large and small subunits.

It localises to the cytoplasm. The catalysed reaction is Exonucleolytic cleavage in either 5'- to 3'- or 3'- to 5'-direction to yield nucleoside 5'-phosphates.. Bidirectionally degrades single-stranded DNA into large acid-insoluble oligonucleotides, which are then degraded further into small acid-soluble oligonucleotides. This Lacticaseibacillus casei (strain BL23) (Lactobacillus casei) protein is Exodeoxyribonuclease 7 large subunit.